A 93-amino-acid chain; its full sequence is Small ribosomal subunit protein bS6 (93 aa).

Belongs to the bacterial ribosomal protein bS6 family.

Functionally, binds together with bS18 to 16S ribosomal RNA. The polypeptide is Small ribosomal subunit protein bS6 (rpsF) (Treponema pallidum (strain Nichols)).